A 137-amino-acid polypeptide reads, in one-letter code: 2-iminobutanoate/2-iminopropanoate deaminase (137 aa).

Position 2 is an N-acetylserine (serine 2). N6-succinyllysine occurs at positions 13 and 67. Threonine 74 is subject to Phosphothreonine. Serine 136 carries the post-translational modification Phosphoserine.

As to quaternary structure, homotrimer. Interacts with YTHDF2. In terms of tissue distribution, expressed by various malignant neoplasms.

The protein resides in the cytoplasm. It is found in the nucleus. It localises to the peroxisome. The protein localises to the mitochondrion. It carries out the reaction 2-iminobutanoate + H2O = 2-oxobutanoate + NH4(+). The catalysed reaction is 2-iminopropanoate + H2O = pyruvate + NH4(+). Its function is as follows. Catalyzes the hydrolytic deamination of enamine/imine intermediates that form during the course of normal metabolism. May facilitate the release of ammonia from these potentially toxic reactive metabolites, reducing their impact on cellular components. It may act on enamine/imine intermediates formed by several types of pyridoxal-5'-phosphate-dependent dehydratases including L-threonine dehydratase. Also promotes endoribonucleolytic cleavage of some transcripts by promoting recruitment of the ribonuclease P/MRP complex. Acts by bridging YTHDF2 and the ribonuclease P/MRP complex. RIDA/HRSP12 binds to N6-methyladenosine (m6A)-containing mRNAs containing a 5'-GGUUC-3' motif: cooperative binding of RIDA/HRSP12 and YTHDF2 to such transcripts lead to recruitment of the ribonuclease P/MRP complex and subsequent endoribonucleolytic cleavage. In Capra hircus (Goat), this protein is 2-iminobutanoate/2-iminopropanoate deaminase.